The primary structure comprises 171 residues: Adenine phosphoribosyltransferase (171 aa).

It belongs to the purine/pyrimidine phosphoribosyltransferase family. In terms of assembly, homodimer.

It is found in the cytoplasm. It carries out the reaction AMP + diphosphate = 5-phospho-alpha-D-ribose 1-diphosphate + adenine. Its pathway is purine metabolism; AMP biosynthesis via salvage pathway; AMP from adenine: step 1/1. Functionally, catalyzes a salvage reaction resulting in the formation of AMP, that is energically less costly than de novo synthesis. The polypeptide is Adenine phosphoribosyltransferase (Rhodospirillum rubrum (strain ATCC 11170 / ATH 1.1.1 / DSM 467 / LMG 4362 / NCIMB 8255 / S1)).